We begin with the raw amino-acid sequence, 281 residues long: Pantothenate synthetase (281 aa).

ATP is bound at residue 30–37 (MGNLHQGH). H37 acts as the Proton donor in catalysis. (R)-pantoate is bound at residue Q61. A beta-alanine-binding site is contributed by Q61. An ATP-binding site is contributed by 149–152 (GNKD). Residue Q155 coordinates (R)-pantoate. Residues I178 and 186–189 (MSSR) each bind ATP.

The protein belongs to the pantothenate synthetase family. In terms of assembly, homodimer.

It localises to the cytoplasm. The enzyme catalyses (R)-pantoate + beta-alanine + ATP = (R)-pantothenate + AMP + diphosphate + H(+). Its pathway is cofactor biosynthesis; (R)-pantothenate biosynthesis; (R)-pantothenate from (R)-pantoate and beta-alanine: step 1/1. Functionally, catalyzes the condensation of pantoate with beta-alanine in an ATP-dependent reaction via a pantoyl-adenylate intermediate. This Shewanella baltica (strain OS223) protein is Pantothenate synthetase.